Consider the following 66-residue polypeptide: DNA-directed RNA polymerase subunit Rpo10 (66 aa).

Zn(2+)-binding residues include Cys-7, Cys-10, Cys-44, and Cys-45.

This sequence belongs to the archaeal Rpo10/eukaryotic RPB10 RNA polymerase subunit family. As to quaternary structure, part of the RNA polymerase complex. Zn(2+) serves as cofactor.

The protein localises to the cytoplasm. It carries out the reaction RNA(n) + a ribonucleoside 5'-triphosphate = RNA(n+1) + diphosphate. DNA-dependent RNA polymerase (RNAP) catalyzes the transcription of DNA into RNA using the four ribonucleoside triphosphates as substrates. This Staphylothermus marinus (strain ATCC 43588 / DSM 3639 / JCM 9404 / F1) protein is DNA-directed RNA polymerase subunit Rpo10.